The primary structure comprises 418 residues: 1-acylglycerol-3-phosphate O-acyltransferase (418 aa).

The AB hydrolase-1 domain occupies 121 to 251 (PTLVMVHGYG…RATWKGAVLN (131 aa)). Positions 197-201 (GHSFG) match the GXSXG motif. The HXXXXD motif motif lies at 379–384 (HFVFID).

Belongs to the peptidase S33 family. ABHD4/ABHD5 subfamily.

The protein localises to the cytoplasm. The enzyme catalyses a 1-acyl-sn-glycero-3-phosphate + an acyl-CoA = a 1,2-diacyl-sn-glycero-3-phosphate + CoA. Its function is as follows. Lysophosphatidic acid acyltransferase which functions in phosphatidic acid biosynthesis. Is highly specific for lysophosphatidic acid and able to use different acyl-CoA donors. May regulate neutral lipid accumulation and participate in the regulation of lipid turnover in vegetative cells. Possesses additional triacylglycerol lipase and phospholipase A2 activities in vitro. Is not active as esterase or lysophospholipase. The protein is 1-acylglycerol-3-phosphate O-acyltransferase of Arabidopsis thaliana (Mouse-ear cress).